The primary structure comprises 264 residues: Hydroxyethylthiazole kinase (264 aa).

Met55 is a binding site for substrate. Residues Arg130 and Ser176 each coordinate ATP. Substrate is bound at residue Gly203.

This sequence belongs to the Thz kinase family. Requires Mg(2+) as cofactor.

It carries out the reaction 5-(2-hydroxyethyl)-4-methylthiazole + ATP = 4-methyl-5-(2-phosphooxyethyl)-thiazole + ADP + H(+). It participates in cofactor biosynthesis; thiamine diphosphate biosynthesis; 4-methyl-5-(2-phosphoethyl)-thiazole from 5-(2-hydroxyethyl)-4-methylthiazole: step 1/1. In terms of biological role, catalyzes the phosphorylation of the hydroxyl group of 4-methyl-5-beta-hydroxyethylthiazole (THZ). In Leptospira borgpetersenii serovar Hardjo-bovis (strain JB197), this protein is Hydroxyethylthiazole kinase.